The chain runs to 967 residues: Siderophore exporter MmpL4 (967 aa).

Transmembrane regions (helical) follow at residues 26–46, 210–230, 242–262, 303–323, 333–353, 384–404, 769–789, 793–813, 821–841, 875–895, and 913–934; these read AFAVPIILGWLAVCVVVTVFV, VIFIMLLLVYRSIITVVLLLI, VVAVLGHSGAIGLTTFAVSLL, AHVILGSGLTIAGATFCLSFA, IPCAVGMLVAVAVALTLGPAV, WPLPVLVATCAIALVGLLALP, WDLLIAAISSLCLIFIIMLII, FIAAAVIVGTVALSLGASFGL, ILAIHLHWLVLAMSVIVLLAV, VVTNAGLVFAVTMASMAVSDL, and TLIVRSFMTPSIAALLGRWFWW. The tract at residues 943 to 967 is disordered; it reads ARTPTVPSETQPAGRPLAMSSDRLG.

This sequence belongs to the resistance-nodulation-cell division (RND) (TC 2.A.6) family. MmpL subfamily. In terms of assembly, interacts with MmpS4.

Its subcellular location is the cell inner membrane. Its function is as follows. Part of an export system, which is required for biosynthesis and secretion of siderophores. The sequence is that of Siderophore exporter MmpL4 (mmpL4) from Mycobacterium tuberculosis (strain CDC 1551 / Oshkosh).